Consider the following 650-residue polypeptide: Acetyl-coenzyme A synthetase (650 aa).

Residues 191–194 (RGGR), T311, and N335 each bind CoA. ATP-binding positions include 387-389 (GEP), 411-416 (DTWWQT), D500, and R515. S523 is a binding site for CoA. R526 contributes to the ATP binding site. Mg(2+) contacts are provided by V537, H539, and V542. Residue R584 coordinates CoA. At K609 the chain carries N6-acetyllysine.

It belongs to the ATP-dependent AMP-binding enzyme family. Requires Mg(2+) as cofactor. In terms of processing, acetylated. Deacetylation by the SIR2-homolog deacetylase activates the enzyme.

It catalyses the reaction acetate + ATP + CoA = acetyl-CoA + AMP + diphosphate. In terms of biological role, catalyzes the conversion of acetate into acetyl-CoA (AcCoA), an essential intermediate at the junction of anabolic and catabolic pathways. AcsA undergoes a two-step reaction. In the first half reaction, AcsA combines acetate with ATP to form acetyl-adenylate (AcAMP) intermediate. In the second half reaction, it can then transfer the acetyl group from AcAMP to the sulfhydryl group of CoA, forming the product AcCoA. This is Acetyl-coenzyme A synthetase from Shewanella baltica (strain OS195).